Reading from the N-terminus, the 57-residue chain is UPF0391 membrane protein IL0696 (57 aa).

2 helical membrane-spanning segments follow: residues 4-24 (WVLI…GGIA) and 28-48 (AGIA…SLVV).

Belongs to the UPF0391 family.

The protein localises to the cell membrane. The chain is UPF0391 membrane protein IL0696 from Idiomarina loihiensis (strain ATCC BAA-735 / DSM 15497 / L2-TR).